Reading from the N-terminus, the 453-residue chain is Tubulin alpha-13 chain (453 aa).

Position 11 (Gln-11) interacts with GTP. An N6-acetyllysine modification is found at Lys-40. GTP contacts are provided by Glu-71, Ser-140, Gly-144, Thr-145, Thr-179, Asn-206, and Asn-228. Mg(2+) is bound at residue Glu-71. Glu-254 is an active-site residue. The interval 429–453 (EKDYEEVGTESQEGDGEEGEDGGDQ) is disordered. The span at 431 to 453 (DYEEVGTESQEGDGEEGEDGGDQ) shows a compositional bias: acidic residues.

This sequence belongs to the tubulin family. Dimer of alpha and beta chains. A typical microtubule is a hollow water-filled tube with an outer diameter of 25 nm and an inner diameter of 15 nM. Alpha-beta heterodimers associate head-to-tail to form protofilaments running lengthwise along the microtubule wall with the beta-tubulin subunit facing the microtubule plus end conferring a structural polarity. Microtubules usually have 13 protofilaments but different protofilament numbers can be found in some organisms and specialized cells. Requires Mg(2+) as cofactor. Acetylation of alpha chains at Lys-40 stabilizes microtubules and affects affinity and processivity of microtubule motors. This modification has a role in multiple cellular functions, ranging from cell motility, cell cycle progression or cell differentiation to intracellular trafficking and signaling.

Its subcellular location is the cytoplasm. It is found in the cytoskeleton. The enzyme catalyses GTP + H2O = GDP + phosphate + H(+). Its function is as follows. Tubulin is the major constituent of microtubules, a cylinder consisting of laterally associated linear protofilaments composed of alpha- and beta-tubulin heterodimers. Microtubules grow by the addition of GTP-tubulin dimers to the microtubule end, where a stabilizing cap forms. Below the cap, tubulin dimers are in GDP-bound state, owing to GTPase activity of alpha-tubulin. The sequence is that of Tubulin alpha-13 chain (TUBA13) from Naegleria pringsheimi (Amoeba).